The chain runs to 230 residues: Transcriptional regulatory protein CitT (230 aa).

The region spanning 6-124 (KVLIIEDDFR…VLHQRLDAYV (119 aa)) is the Response regulatory domain. Asp59 is modified (4-aspartylphosphate). Residues 184–203 (AMEGARLIGASRSTVRRYFE) constitute a DNA-binding region (H-T-H motif).

In terms of processing, phosphorylated by CitS.

It is found in the cytoplasm. Functionally, member of the two-component regulatory system CitT/CitS. The polypeptide is Transcriptional regulatory protein CitT (citT) (Halalkalibacterium halodurans (strain ATCC BAA-125 / DSM 18197 / FERM 7344 / JCM 9153 / C-125) (Bacillus halodurans)).